We begin with the raw amino-acid sequence, 348 residues long: Rhodopsin (348 aa).

N-acetylmethionine is present on M1. Residues 1 to 36 (MNGTEGPNFYVPFSNKTGVVRSPFEYPQYYLAEPWQ) lie on the Extracellular side of the membrane. N2 and N15 each carry an N-linked (GlcNAc...) asparagine glycan. Residues 37–61 (FSMLAAYMFLLIVLGFPINFLTLYV) form a helical membrane-spanning segment. Residues 62-73 (TVQHKKLRTPLN) are Cytoplasmic-facing. A helical membrane pass occupies residues 74–96 (YILLNLAVADLFMVFGGFTTTLY). At 97 to 110 (TSLHGYFVFGPTGC) the chain is on the extracellular side. A disulfide bridge connects residues C110 and C187. Residues 111–133 (NLEGFFATLGGEIALWSLVVLAI) traverse the membrane as a helical segment. Positions 134 to 136 (ERY) match the 'Ionic lock' involved in activated form stabilization motif. Residues 134-152 (ERYVVVCKPMSNFRFGENH) lie on the Cytoplasmic side of the membrane. Residues 153-173 (AIMGVAFTWVMALACAAPPLV) traverse the membrane as a helical segment. Residues 174–202 (GWSRYIPEGMQCSCGIDYYTLKPEVNNES) lie on the Extracellular side of the membrane. Residue E201 participates in Zn(2+) binding. The helical transmembrane segment at 203–224 (FVIYMFVVHFTIPMIVIFFCYG) threads the bilayer. Residues 225-252 (QLVFTVKEAAAQQQESATTQKAEKEVTR) are Cytoplasmic-facing. The chain crosses the membrane as a helical span at residues 253–274 (MVIIMVIAFLICWVPYASVAFY). Residues 275–286 (IFTHQGSNFGPI) are Extracellular-facing. Q279 lines the Zn(2+) pocket. The helical transmembrane segment at 287–308 (FMTLPAFFAKSSSIYNPVIYIM) threads the bilayer. K296 carries the post-translational modification N6-(retinylidene)lysine. The Cytoplasmic portion of the chain corresponds to 309–348 (MNKQFRNCMLTTLCCGKNPLGDDEASTTGSKTETSQVAPA). S-palmitoyl cysteine attachment occurs at residues C322 and C323. Positions 330–348 (DDEASTTGSKTETSQVAPA) are interaction with SAG. Phosphoserine is present on S334. Phosphothreonine occurs at positions 335 and 336. Phosphoserine is present on S338. Residues T340 and T342 each carry the phosphothreonine modification. S343 is subject to Phosphoserine.

This sequence belongs to the G-protein coupled receptor 1 family. Opsin subfamily. In terms of assembly, homodimer. May form a complex composed of RHO, GRK1 and RCVRN in a Ca(2+)-dependent manner; RCVRN prevents the interaction between GRK1 and RHO. Interacts with GRK1. Interacts (phosphorylated form) with SAG. Interacts with GNAT1. Interacts with GNAT3. SAG and G-proteins compete for a common binding site. Interacts with PRCD; the interaction promotes PRCD stability. Forms a complex with ASAP1 and ARF4. Forms a complex with ASAP1, RAB11A, Rabin8/RAB3IP, ARF4 and RAB11FIP3; the complex regulates Golgi-to-cilia rhodopsin/RHO transport in photoreceptors. Post-translationally, phosphorylated on some or all of the serine and threonine residues present in the C-terminal region. In terms of processing, contains one covalently linked retinal chromophore. Upon light absorption, the covalently bound 11-cis-retinal is converted to all-trans-retinal. After hydrolysis of the Schiff base and release of the covalently bound all-trans-retinal, active rhodopsin is regenerated by binding of a fresh molecule of 11-cis-retinal.

It localises to the membrane. The protein resides in the cell projection. The protein localises to the cilium. Its subcellular location is the photoreceptor outer segment. Photoreceptor required for image-forming vision at low light intensity. Required for photoreceptor cell viability after birth. Light-induced isomerization of 11-cis to all-trans retinal triggers a conformational change that activates signaling via G-proteins. Subsequent receptor phosphorylation mediates displacement of the bound G-protein alpha subunit by the arrestin SAG and terminates signaling. This chain is Rhodopsin (RHO), found in Felis catus (Cat).